Here is a 306-residue protein sequence, read N- to C-terminus: Glutaminase (306 aa).

Substrate is bound by residues S64, N115, E159, N166, Y190, Y242, and V260.

The protein belongs to the glutaminase family. Homotetramer.

It carries out the reaction L-glutamine + H2O = L-glutamate + NH4(+). The protein is Glutaminase of Photobacterium profundum (strain SS9).